The sequence spans 247 residues: MLPSQEASKLYHEHYMRNSRAIGVLWAIFTICFAIINVVVFIQPYWVGDSVSTPKPGYFGLFHYCVGSGLAGRELTCRGSFTDFSTIPSSAFKAAAFFVLLSMVLILGCITCFALFFFCNTATVYKICAWMQLLAALCLVLGCMIFPDGWDAETIRDMCGAKTGKYSLGDCSVRWAYILAIIGILNALILSFLAFVLGNRQTDLLQEELKQENKDFVGTTVSSVLRPGGDVSGWGVLPCPVAHTQGP.

4 helical membrane passes run Ile-22–Ile-42, Phe-97–Phe-117, Ile-127–Pro-147, and Ile-178–Gly-198.

This sequence belongs to the LHFP family. Interacts with GABA(A) receptor subunits. Interacts with GABRB3. Interacts with GABRA2. Interacts with GABRG2. Interacts with GABRA1. Identified in a complex of 720 kDa composed of LHFPL4, NLGN2, GABRA1, GABRB2, GABRG2 and GABRB3. Interacts with NLGN2; leading to mutual regulation of protein level and synaptic clustering. Highly expressed in the brain, including the cortex, hippocampus, midbrain, olfactory bulb pona plus medulla (at protein level). Expressed in the in the cerebellar granular layer and in granular layer. Colocalized with GPHN at inhibitory synapses. Weakly expressed in heart, testis, lung, intestine, vagina, ovary and uterus.

Its subcellular location is the cell projection. It is found in the dendrite. It localises to the postsynaptic cell membrane. Its function is as follows. Plays a role in the regulation of inhibitory synapse formation and function by being involved in maintening gamma-aminobutyric acid receptors (GABAARs) clustering and their associated scaffold proteins at inhibitory synaptic sites. Acts in concert with NLGN2 to recruit or stabilize GABAARs. The polypeptide is LHFPL tetraspan subfamily member 4 protein (Mus musculus (Mouse)).